A 351-amino-acid polypeptide reads, in one-letter code: DNA polymerase IV (351 aa).

One can recognise a UmuC domain in the interval 4 to 185 (IIHVDMDCFY…LPLGKIPGVG (182 aa)). Mg(2+)-binding residues include Asp-8 and Asp-103. Glu-104 is an active-site residue.

The protein belongs to the DNA polymerase type-Y family. Monomer. The cofactor is Mg(2+).

It is found in the cytoplasm. The enzyme catalyses DNA(n) + a 2'-deoxyribonucleoside 5'-triphosphate = DNA(n+1) + diphosphate. Poorly processive, error-prone DNA polymerase involved in untargeted mutagenesis. Copies undamaged DNA at stalled replication forks, which arise in vivo from mismatched or misaligned primer ends. These misaligned primers can be extended by PolIV. Exhibits no 3'-5' exonuclease (proofreading) activity. May be involved in translesional synthesis, in conjunction with the beta clamp from PolIII. This Citrobacter koseri (strain ATCC BAA-895 / CDC 4225-83 / SGSC4696) protein is DNA polymerase IV.